Here is a 394-residue protein sequence, read N- to C-terminus: Protein TsgA homolog (394 aa).

A run of 12 helical transmembrane segments spans residues 11 to 31 (WISY…GMVM), 51 to 71 (FLNA…EIIP), 76 to 96 (LMFG…GKSL), 101 to 121 (LCMF…TFLI), 134 to 154 (LLFT…VAAM), 162 to 182 (WYWV…LTLF), 206 to 226 (IGVL…LGFI), 251 to 271 (FWTS…FFDL), 274 to 294 (IVTI…STDN), 302 to 322 (IMAL…LGSL), 334 to 354 (FILT…GPIV), and 363 to 383 (LTTA…LGFV).

This sequence belongs to the major facilitator superfamily. TsgA family.

The protein resides in the cell inner membrane. The protein is Protein TsgA homolog of Serratia proteamaculans (strain 568).